The primary structure comprises 380 residues: MMKKYSLTTHSTETCQILFTSVSNVFKYIPSGTRRILIMYQDSVSQVLPIFSAASGVQCYRYLIPDSESAKQLGVAEQCWRFLAQNNFTRSDLIVSCGGGAASDLSGFVASSYLRGIKVIHIPTTLVGMVDAAIGGKTGINLKEGKNLVGSFYSPYIVLCDPSMLTTLNEEHLKSGLAEIIKCGFIQDESILSILEHNAQDHMDCSQRVCAETLPPKLLEELIHKAVSVKITMVDSDFRDTHKRQFLNYGHTLAHALEAATSHKLPHGQAVSIGMVYAAQVAFAKGLIGRNILTRHERILETYGLPICPPEVQWRNITPYMQRDKKNMQSNDTDSDKDSREMPQISTQSKLVLLREIANPFISSVSHTVLLKAYEAMFPQ.

NAD(+) is bound by residues 100–104 (GAASD), 124–125 (TT), lysine 137, and lysine 146. Positions 179, 251, and 267 each coordinate Zn(2+). Positions 320-343 (YMQRDKKNMQSNDTDSDKDSREMP) are disordered.

It belongs to the sugar phosphate cyclases superfamily. Dehydroquinate synthase family. The cofactor is NAD(+). Co(2+) is required as a cofactor. Requires Zn(2+) as cofactor.

Its subcellular location is the cytoplasm. The catalysed reaction is 7-phospho-2-dehydro-3-deoxy-D-arabino-heptonate = 3-dehydroquinate + phosphate. It participates in metabolic intermediate biosynthesis; chorismate biosynthesis; chorismate from D-erythrose 4-phosphate and phosphoenolpyruvate: step 2/7. Catalyzes the conversion of 3-deoxy-D-arabino-heptulosonate 7-phosphate (DAHP) to dehydroquinate (DHQ). The chain is 3-dehydroquinate synthase from Tropheryma whipplei (strain Twist) (Whipple's bacillus).